Here is a 188-residue protein sequence, read N- to C-terminus: Large ribosomal subunit protein uL22 (188 aa).

Residues 155–188 are disordered; it reads STPEGAKKGKKKKGTKDAVEKSSKRVKTAATAAH.

Belongs to the universal ribosomal protein uL22 family.

This chain is Large ribosomal subunit protein uL22 (RpL17), found in Agriotes lineatus (Lined click beetle).